The primary structure comprises 554 residues: Glucose-6-phosphate isomerase (554 aa).

Residue E358 is the Proton donor of the active site. Catalysis depends on residues H389 and K515. Residues 527–540 (ADNSPAPQSDSSTD) show a composition bias toward polar residues. Residues 527–554 (ADNSPAPQSDSSTDALVRRYRSERGRTS) are disordered. Residues 542–554 (LVRRYRSERGRTS) show a composition bias toward basic and acidic residues.

Belongs to the GPI family.

The protein resides in the cytoplasm. The enzyme catalyses alpha-D-glucose 6-phosphate = beta-D-fructose 6-phosphate. The protein operates within carbohydrate biosynthesis; gluconeogenesis. It functions in the pathway carbohydrate degradation; glycolysis; D-glyceraldehyde 3-phosphate and glycerone phosphate from D-glucose: step 2/4. In terms of biological role, catalyzes the reversible isomerization of glucose-6-phosphate to fructose-6-phosphate. The sequence is that of Glucose-6-phosphate isomerase from Mycobacterium avium (strain 104).